Here is a 512-residue protein sequence, read N- to C-terminus: ATP synthase subunit alpha (512 aa).

Residue 169–176 (GDRQTGKT) coordinates ATP.

This sequence belongs to the ATPase alpha/beta chains family. In terms of assembly, F-type ATPases have 2 components, CF(1) - the catalytic core - and CF(0) - the membrane proton channel. CF(1) has five subunits: alpha(3), beta(3), gamma(1), delta(1), epsilon(1). CF(0) has three main subunits: a(1), b(2) and c(9-12). The alpha and beta chains form an alternating ring which encloses part of the gamma chain. CF(1) is attached to CF(0) by a central stalk formed by the gamma and epsilon chains, while a peripheral stalk is formed by the delta and b chains.

The protein localises to the cell membrane. It carries out the reaction ATP + H2O + 4 H(+)(in) = ADP + phosphate + 5 H(+)(out). Produces ATP from ADP in the presence of a proton gradient across the membrane. The alpha chain is a regulatory subunit. The polypeptide is ATP synthase subunit alpha (Elusimicrobium minutum (strain Pei191)).